Reading from the N-terminus, the 418-residue chain is MSGATLLKESGPREVFCGLTSIVWLHRRMPDAFFLVVGSRTCAHLIQSAAGVMIFAEPRFGTAILEERDLAGLADAHDELNRVVKNLLARRPEIKTLFLVGSCPSEVIKIDLSRVAENLNIELKGQVTVLNYSGSGIETTFTQGEDGALKALIPLMPKSDQKKLLLVGTLANAVEDRLTSIFNRLGIDKVESFPPRQSTELPSIGPETKVLLTQPYLTDTARELKNKGAEIIEAPFPLGVTGSTLWIQAAADSFGIEKSLVDSILNPLISRAKQALIPHVEKLSGKKLFLLPESQLEIPLARFLSNECGMEIIEIGTPYLNRDLMKAEIDLLPPDCRIVEGQHVERQLDRVRDSSPDLVVCGMGLANPLEAEGISTKWSIEMVFSPIHGIDQASDLAELFSRPLRRHDILNPKTLTSN.

[4Fe-4S] cluster-binding residues include Cys-17, Cys-42, and Cys-103.

Belongs to the BchN/ChlN family. As to quaternary structure, protochlorophyllide reductase is composed of three subunits; ChlL, ChlN and ChlB. Forms a heterotetramer of two ChlB and two ChlN subunits. It depends on [4Fe-4S] cluster as a cofactor.

It catalyses the reaction chlorophyllide a + oxidized 2[4Fe-4S]-[ferredoxin] + 2 ADP + 2 phosphate = protochlorophyllide a + reduced 2[4Fe-4S]-[ferredoxin] + 2 ATP + 2 H2O. It functions in the pathway porphyrin-containing compound metabolism; chlorophyll biosynthesis (light-independent). Its function is as follows. Component of the dark-operative protochlorophyllide reductase (DPOR) that uses Mg-ATP and reduced ferredoxin to reduce ring D of protochlorophyllide (Pchlide) to form chlorophyllide a (Chlide). This reaction is light-independent. The NB-protein (ChlN-ChlB) is the catalytic component of the complex. This Prochlorococcus marinus (strain NATL2A) protein is Light-independent protochlorophyllide reductase subunit N.